We begin with the raw amino-acid sequence, 340 residues long: Chorismate mutase 1, chloroplastic (340 aa).

Residues 1–65 (MEASLLMRSS…KPRSGTSSVH (65 aa)) constitute a chloroplast transit peptide. Position 66 is an N-acetylalanine (alanine 66). Arginine 79 is a binding site for L-phenylalanine. In terms of domain architecture, Chorismate mutase spans 79-340 (RVDESESLTL…QVEYLLRRLD (262 aa)). Residues arginine 150 and 211–214 (NYGS) contribute to the L-tyrosine site. 211 to 214 (NYGS) is a binding site for L-phenylalanine.

In terms of assembly, homodimer. As to expression, expressed in roots, shoots, rosette leaves, stems, cauline leaves, flowers and siliques.

It is found in the plastid. Its subcellular location is the chloroplast. The catalysed reaction is chorismate = prephenate. It participates in metabolic intermediate biosynthesis; prephenate biosynthesis; prephenate from chorismate: step 1/1. With respect to regulation, allosterically inhibited by tyrosine and phenylalanine. Activated by tryptophan. Its function is as follows. May play a role in chloroplast biogenesis. The polypeptide is Chorismate mutase 1, chloroplastic (Arabidopsis thaliana (Mouse-ear cress)).